We begin with the raw amino-acid sequence, 256 residues long: Thiazole synthase (256 aa).

K95 acts as the Schiff-base intermediate with DXP in catalysis. Residues G156, 182–183, and 204–205 each bind 1-deoxy-D-xylulose 5-phosphate; these read AG and NT.

The protein belongs to the ThiG family. Homotetramer. Forms heterodimers with either ThiH or ThiS.

Its subcellular location is the cytoplasm. The catalysed reaction is [ThiS sulfur-carrier protein]-C-terminal-Gly-aminoethanethioate + 2-iminoacetate + 1-deoxy-D-xylulose 5-phosphate = [ThiS sulfur-carrier protein]-C-terminal Gly-Gly + 2-[(2R,5Z)-2-carboxy-4-methylthiazol-5(2H)-ylidene]ethyl phosphate + 2 H2O + H(+). Its pathway is cofactor biosynthesis; thiamine diphosphate biosynthesis. In terms of biological role, catalyzes the rearrangement of 1-deoxy-D-xylulose 5-phosphate (DXP) to produce the thiazole phosphate moiety of thiamine. Sulfur is provided by the thiocarboxylate moiety of the carrier protein ThiS. In vitro, sulfur can be provided by H(2)S. In Idiomarina loihiensis (strain ATCC BAA-735 / DSM 15497 / L2-TR), this protein is Thiazole synthase.